Reading from the N-terminus, the 558-residue chain is Formate--tetrahydrofolate ligase (558 aa).

ATP is bound at residue 65–72; it reads TPAGEGKT.

The protein belongs to the formate--tetrahydrofolate ligase family.

It catalyses the reaction (6S)-5,6,7,8-tetrahydrofolate + formate + ATP = (6R)-10-formyltetrahydrofolate + ADP + phosphate. It participates in one-carbon metabolism; tetrahydrofolate interconversion. This chain is Formate--tetrahydrofolate ligase, found in Methylobacterium sp. (strain 4-46).